The following is a 349-amino-acid chain: tRNA pseudouridine synthase D (349 aa).

Phe-27 is a binding site for substrate. Residue Asp-80 is the Nucleophile of the active site. Residue Asn-129 coordinates substrate. A TRUD domain is found at 155–303 (GVPNYFGAQR…VEAARRAMLL (149 aa)). Phe-329 serves as a coordination point for substrate.

Belongs to the pseudouridine synthase TruD family.

It catalyses the reaction uridine(13) in tRNA = pseudouridine(13) in tRNA. In terms of biological role, responsible for synthesis of pseudouridine from uracil-13 in transfer RNAs. The protein is tRNA pseudouridine synthase D of Escherichia coli O6:H1 (strain CFT073 / ATCC 700928 / UPEC).